A 145-amino-acid chain; its full sequence is Shadow of prion protein (145 aa).

A signal peptide spans 1-24; that stretch reads MNWAAAVCWALLLAATFLCDGSAA. Asn-105 is a glycosylation site (N-linked (GlcNAc...) asparagine). Ser-119 is lipidated: GPI-anchor amidated serine. The propeptide at 120–145 is removed in mature form; the sequence is GAGPTGHRHLCPLLGGALGALRLLRP.

It belongs to the SPRN family. Post-translationally, N-glycosylated. As to expression, mainly expressed in brain.

It localises to the cell membrane. Prion-like protein that has PrP(C)-like neuroprotective activity. May act as a modulator for the biological actions of normal and abnormal PrP. In Ovis aries (Sheep), this protein is Shadow of prion protein (SPRN).